Reading from the N-terminus, the 1210-residue chain is Microtubule-associated tumor suppressor 1 homolog (1210 aa).

Disordered regions lie at residues 1–21, 370–404, 446–482, 513–545, and 585–618; these read MNDDNSDRTEDGSRYVFIRDK, DPHIDSHDNDSDIQSSTEELTLRSVSGQRGSPYEM, VENGPRDAKRAPNLKGEPTNMPKPNLGKSATKTNTTV, QPKDTSIMKDTPSPQVTGGSSPSPGPSKHLTMM, and HSKNASLGVPRTTSATKSNQENVDKTGSPHAGSE. The span at 370–379 shows a compositional bias: basic and acidic residues; sequence DPHIDSHDND. A phosphoserine mark is found at Ser-375, Ser-380, and Ser-393. Positions 381–398 are enriched in polar residues; it reads DIQSSTEELTLRSVSGQR. The segment covering 446–455 has biased composition (basic and acidic residues); it reads VENGPRDAKR. Positions 473–482 are enriched in polar residues; it reads KSATKTNTTV. Over residues 524–534 the composition is skewed to low complexity; the sequence is PSPQVTGGSSP. Polar residues predominate over residues 585-605; the sequence is HSKNASLGVPRTTSATKSNQE. Phosphoserine is present on Ser-621. Residues 683-771 are disordered; it reads SKSLLVGSAP…YEEKPPKQAF (89 aa). Positions 692-702 are enriched in polar residues; that stretch reads PKTSTTPGRSS. The stretch at 876-1171 forms a coiled coil; the sequence is IQHLLSEREE…RLSMENEELL (296 aa). A phosphoserine mark is found at Ser-1143, Ser-1164, Ser-1185, Ser-1195, Ser-1199, Ser-1201, Ser-1203, Ser-1204, and Ser-1208. The interval 1177–1210 is disordered; sequence GDLCSPKRSPTSSAIPFQSPRNSGSFSSPSISPR. The segment covering 1195-1210 has biased composition (low complexity); that stretch reads SPRNSGSFSSPSISPR.

Belongs to the MTUS1 family. As to quaternary structure, homodimer. Interacts with AGTR2. Interacts with PTPN6. As to expression, ubiquitously expressed, with highest levels in uterus and adrenal gland.

The protein resides in the mitochondrion. It localises to the golgi apparatus. Its subcellular location is the cell membrane. It is found in the nucleus. Functionally, cooperates with AGTR2 to inhibit ERK2 activation and cell proliferation. May be required for AGTR2 cell surface expression. Together with PTPN6, induces UBE2V2 expression upon angiotensin-II stimulation. In Mus musculus (Mouse), this protein is Microtubule-associated tumor suppressor 1 homolog (Mtus1).